A 327-amino-acid chain; its full sequence is tRNA pseudouridine synthase B (327 aa).

The Nucleophile role is filled by aspartate 83.

Belongs to the pseudouridine synthase TruB family. Type 1 subfamily.

It catalyses the reaction uridine(55) in tRNA = pseudouridine(55) in tRNA. Responsible for synthesis of pseudouridine from uracil-55 in the psi GC loop of transfer RNAs. The polypeptide is tRNA pseudouridine synthase B (Mesomycoplasma hyopneumoniae (strain 232) (Mycoplasma hyopneumoniae)).